Reading from the N-terminus, the 343-residue chain is Tribbles homolog 2 (343 aa).

The interval 25–50 (EELSSIRSAEPSQSFSPNLGSPSPPE) is disordered. Positions 29-45 (SIRSAEPSQSFSPNLGS) are enriched in polar residues. Residues 61-308 (IGKYLLLEPL…SQEILDHPWF (248 aa)) enclose the Protein kinase domain.

The protein belongs to the protein kinase superfamily. CAMK Ser/Thr protein kinase family. Tribbles subfamily. Highly expressed in the thyroid, also present in ovary and cerebrum.

It is found in the cytoplasm. The protein localises to the cytoskeleton. Functionally, interacts with MAPK kinases and regulates activation of MAP kinases. Does not display kinase activity. The sequence is that of Tribbles homolog 2 from Canis lupus familiaris (Dog).